Consider the following 67-residue polypeptide: Small ribosomal subunit protein eS17 (67 aa).

The protein belongs to the eukaryotic ribosomal protein eS17 family.

This chain is Small ribosomal subunit protein eS17, found in Thermococcus onnurineus (strain NA1).